Here is a 419-residue protein sequence, read N- to C-terminus: Putative competence-damage inducible protein (419 aa).

It belongs to the CinA family.

The polypeptide is Putative competence-damage inducible protein (Lysinibacillus sphaericus (strain C3-41)).